The primary structure comprises 156 residues: 13 kDa prolamin C (156 aa).

The first 19 residues, 1–19 (MKIIFVFALLAIVACNASA), serve as a signal peptide directing secretion. The octapeptide unique to cereal prolamins stretch occupies residues 77–84 (QQQCCQQL).

This sequence belongs to the prolamin family.

The protein resides in the vacuole. Its subcellular location is the aleurone grain. Seed storage protein; serves as a source of nitrogen, carbon and sulfur for the young developing seedling. This Oryza sativa subsp. japonica (Rice) protein is 13 kDa prolamin C (PROLM25).